A 506-amino-acid chain; its full sequence is MNALQDQHVLILGLGASGLAMARWCARCGARVTVADTRSAPPQLAALQRELPAAQFISGAFDAALVVGTDVRAVFKSPGLSPLDVATVIEAANTIGIRATGELGLFSQALADLKATQNYTPKVLAVTGTNGKTTVTALTGLLVERGGKSVAVAGNIGPTLLDTLIQHLAAGTLPEVWVIELSSFQLEGETGFEPSAAAVLNITQDHLDWHGSMAAYVAAKAHVFGATGLMILNREDPQVMAMLPEPVRVKLQRPQLRAHVTFGADLPRRPGDFGLEQVNGMLWLVRALEADETLKNRKGETPELFLQRLMPADALRIRGRHNAVNALAALALAQAAGCALGPMLYGLRDYRGEPHRVAPIGIFNEVEFFDDSKGTNVGATVAALAGLGSERKVIVILGGEGKGQDFAPLVDPVSRYARAVVLIGRDAPLLRAALQATHVPLLEAESMAQAVALANAQAHAGDAVLLSPACASFDMFDNYEHRAQVFAQAVGELASAAGAAWEGAAP.

An ATP-binding site is contributed by 128–134 (GTNGKTT).

It belongs to the MurCDEF family.

The protein resides in the cytoplasm. The catalysed reaction is UDP-N-acetyl-alpha-D-muramoyl-L-alanine + D-glutamate + ATP = UDP-N-acetyl-alpha-D-muramoyl-L-alanyl-D-glutamate + ADP + phosphate + H(+). It participates in cell wall biogenesis; peptidoglycan biosynthesis. Its function is as follows. Cell wall formation. Catalyzes the addition of glutamate to the nucleotide precursor UDP-N-acetylmuramoyl-L-alanine (UMA). The chain is UDP-N-acetylmuramoylalanine--D-glutamate ligase from Albidiferax ferrireducens (strain ATCC BAA-621 / DSM 15236 / T118) (Rhodoferax ferrireducens).